Here is a 494-residue protein sequence, read N- to C-terminus: Cytochrome P450 2G1 (494 aa).

Position 439 (Cys439) interacts with heme.

It belongs to the cytochrome P450 family. Heme serves as cofactor. Olfactory epithelium.

It is found in the endoplasmic reticulum membrane. The protein localises to the microsome membrane. The catalysed reaction is an organic molecule + reduced [NADPH--hemoprotein reductase] + O2 = an alcohol + oxidized [NADPH--hemoprotein reductase] + H2O + H(+). Functionally, cytochromes P450 are a group of heme-thiolate monooxygenases. This isozyme seems to be implicated in olfaction. The protein is Cytochrome P450 2G1 (Cyp2g1) of Rattus norvegicus (Rat).